A 572-amino-acid chain; its full sequence is Protein 5NUC (572 aa).

A signal peptide spans 1-25 (MLFFLNFFVLVFSIELALLTASAAA). Residues aspartate 39 and histidine 41 each contribute to the Zn(2+) site. Cysteine 54 and cysteine 64 are oxidised to a cystine. Asparagine 82 is a glycosylation site (N-linked (GlcNAc...) asparagine). Residues aspartate 93, asparagine 125, histidine 227, and histidine 250 each coordinate Zn(2+). Residues cysteine 360 and cysteine 365 are joined by a disulfide bond. Positions 361, 399, 404, and 427 each coordinate substrate. Residues asparagine 454 and asparagine 490 are each glycosylated (N-linked (GlcNAc...) asparagine). A disulfide bridge links cysteine 488 with cysteine 491. 512–518 (FMKDGGD) is a substrate binding site.

This sequence belongs to the 5'-nucleotidase family. Zn(2+) is required as a cofactor.

It catalyses the reaction UDP-sugar + H2O = UMP + alpha-D-aldose 1-phosphate.. The catalysed reaction is a ribonucleoside 5'-phosphate + H2O = a ribonucleoside + phosphate. In terms of biological role, degradation of external UDP-glucose to uridine monophosphate and glucose-1-phosphate, which can then be used by the cell. The polypeptide is Protein 5NUC (5NUC) (Lutzomyia longipalpis (Sand fly)).